A 617-amino-acid chain; its full sequence is Elongation factor 4 (617 aa).

A tr-type G domain is found at 17-198 (AIIRNFCIIA…KIVRDLPAPV (182 aa)). Residues 29 to 34 (DHGKST) and 145 to 148 (NKID) contribute to the GTP site.

Belongs to the TRAFAC class translation factor GTPase superfamily. Classic translation factor GTPase family. LepA subfamily.

It is found in the cell membrane. The enzyme catalyses GTP + H2O = GDP + phosphate + H(+). Functionally, required for accurate and efficient protein synthesis under certain stress conditions. May act as a fidelity factor of the translation reaction, by catalyzing a one-codon backward translocation of tRNAs on improperly translocated ribosomes. Back-translocation proceeds from a post-translocation (POST) complex to a pre-translocation (PRE) complex, thus giving elongation factor G a second chance to translocate the tRNAs correctly. Binds to ribosomes in a GTP-dependent manner. The polypeptide is Elongation factor 4 (Paenarthrobacter aurescens (strain TC1)).